An 89-amino-acid polypeptide reads, in one-letter code: Small ribosomal subunit protein uS14A (89 aa).

Belongs to the universal ribosomal protein uS14 family. As to quaternary structure, part of the 30S ribosomal subunit. Contacts proteins S3 and S10.

In terms of biological role, binds 16S rRNA, required for the assembly of 30S particles and may also be responsible for determining the conformation of the 16S rRNA at the A site. The polypeptide is Small ribosomal subunit protein uS14A (Bacillus pumilus (strain SAFR-032)).